Reading from the N-terminus, the 199-residue chain is dITP/XTP pyrophosphatase (199 aa).

8–13 (SGNAGK) serves as a coordination point for substrate. Catalysis depends on Asp69, which acts as the Proton acceptor. A Mg(2+)-binding site is contributed by Asp69. Substrate-binding positions include Ser70, 154–157 (FGYN), Lys177, and 182–183 (HR).

It belongs to the HAM1 NTPase family. In terms of assembly, homodimer. Mg(2+) serves as cofactor.

It catalyses the reaction XTP + H2O = XMP + diphosphate + H(+). The catalysed reaction is dITP + H2O = dIMP + diphosphate + H(+). The enzyme catalyses ITP + H2O = IMP + diphosphate + H(+). Its function is as follows. Pyrophosphatase that catalyzes the hydrolysis of nucleoside triphosphates to their monophosphate derivatives, with a high preference for the non-canonical purine nucleotides XTP (xanthosine triphosphate), dITP (deoxyinosine triphosphate) and ITP. Seems to function as a house-cleaning enzyme that removes non-canonical purine nucleotides from the nucleotide pool, thus preventing their incorporation into DNA/RNA and avoiding chromosomal lesions. This chain is dITP/XTP pyrophosphatase, found in Xanthomonas axonopodis pv. citri (strain 306).